A 560-amino-acid chain; its full sequence is Serine palmitoyltransferase 2 (560 aa).

Residues P65 to L85 traverse the membrane as a helical segment. Position 377 is an N6-(pyridoxal phosphate)lysine (K377).

The protein belongs to the class-II pyridoxal-phosphate-dependent aminotransferase family. Component of the serine palmitoyltransferase (SPT) complex, which is composed of SPTLC1, SPTLC2 or SPTLC3 and SPTSSA or SPTSSB. The heterodimer consisting of SPTLC1 and SPTLC2/SPTLC3 forms the catalytic core of the enzyme, while SPTSSA or SPTSSB subunits determine substrate specificity. SPT also interacts with ORMDL proteins, especially ORMDL3, which negatively regulate SPT activity in the presence of ceramides. Forms dimers of heterodimers with SPTLC1. Requires pyridoxal 5'-phosphate as cofactor. In terms of tissue distribution, expressed in a variety of tissues. Expressed in brains cortices (at protein level). Expressed in brown and white adipose tissues. Expressed in liver.

It localises to the endoplasmic reticulum membrane. It catalyses the reaction L-serine + hexadecanoyl-CoA + H(+) = 3-oxosphinganine + CO2 + CoA. It carries out the reaction octadecanoyl-CoA + L-serine + H(+) = 3-oxoeicosasphinganine + CO2 + CoA. The protein operates within lipid metabolism; sphingolipid metabolism. SPT complex catalytic activity is negatively regulated by ORMDL proteins, including ORMDL3, in the presence of ceramides. This mechanism allows to maintain ceramide levels at sufficient concentrations for the production of complex sphingolipids, but which prevents the accumulation of ceramides to levels that trigger apoptosis. In terms of biological role, component of the serine palmitoyltransferase multisubunit enzyme (SPT) that catalyzes the initial and rate-limiting step in sphingolipid biosynthesis by condensing L-serine and activated acyl-CoA (most commonly palmitoyl-CoA) to form long-chain bases. The SPT complex is composed of SPTLC1, SPTLC2 or SPTLC3 and SPTSSA or SPTSSB. Within this complex, the heterodimer consisting of SPTLC1 and SPTLC2/SPTLC3 forms the catalytic core. The composition of the serine palmitoyltransferase (SPT) complex determines the substrate preference. The SPTLC1-SPTLC2-SPTSSA complex shows a strong preference for C16-CoA substrate, while the SPTLC1-SPTLC3-SPTSSA isozyme uses both C14-CoA and C16-CoA as substrates, with a slight preference for C14-CoA. The SPTLC1-SPTLC2-SPTSSB complex shows a strong preference for C18-CoA substrate, while the SPTLC1-SPTLC3-SPTSSB isozyme displays an ability to use a broader range of acyl-CoAs, without apparent preference. Crucial for adipogenesis. The chain is Serine palmitoyltransferase 2 from Mus musculus (Mouse).